The primary structure comprises 245 residues: 1-(5-phosphoribosyl)-5-[(5-phosphoribosylamino)methylideneamino] imidazole-4-carboxamide isomerase (245 aa).

Catalysis depends on aspartate 7, which acts as the Proton acceptor. Catalysis depends on aspartate 129, which acts as the Proton donor.

It belongs to the HisA/HisF family.

Its subcellular location is the cytoplasm. The enzyme catalyses 1-(5-phospho-beta-D-ribosyl)-5-[(5-phospho-beta-D-ribosylamino)methylideneamino]imidazole-4-carboxamide = 5-[(5-phospho-1-deoxy-D-ribulos-1-ylimino)methylamino]-1-(5-phospho-beta-D-ribosyl)imidazole-4-carboxamide. The protein operates within amino-acid biosynthesis; L-histidine biosynthesis; L-histidine from 5-phospho-alpha-D-ribose 1-diphosphate: step 4/9. This is 1-(5-phosphoribosyl)-5-[(5-phosphoribosylamino)methylideneamino] imidazole-4-carboxamide isomerase from Yersinia pestis bv. Antiqua (strain Antiqua).